The following is a 203-amino-acid chain: Thymidine kinase (203 aa).

Residues Gly-21–Thr-28 and Asp-99–Gln-102 contribute to the ATP site. Catalysis depends on Glu-100, which acts as the Proton acceptor. Zn(2+) is bound by residues Cys-156, Cys-159, Cys-194, and Cys-197.

It belongs to the thymidine kinase family. As to quaternary structure, homotetramer.

The protein localises to the cytoplasm. The catalysed reaction is thymidine + ATP = dTMP + ADP + H(+). The protein is Thymidine kinase of Mesoplasma florum (strain ATCC 33453 / NBRC 100688 / NCTC 11704 / L1) (Acholeplasma florum).